Here is a 378-residue protein sequence, read N- to C-terminus: Ribosomal RNA large subunit methyltransferase G (378 aa).

Belongs to the methyltransferase superfamily. RlmG family.

It is found in the cytoplasm. The enzyme catalyses guanosine(1835) in 23S rRNA + S-adenosyl-L-methionine = N(2)-methylguanosine(1835) in 23S rRNA + S-adenosyl-L-homocysteine + H(+). In terms of biological role, specifically methylates the guanine in position 1835 (m2G1835) of 23S rRNA. The sequence is that of Ribosomal RNA large subunit methyltransferase G from Escherichia coli (strain ATCC 8739 / DSM 1576 / NBRC 3972 / NCIMB 8545 / WDCM 00012 / Crooks).